The chain runs to 160 residues: Protein max (160 aa).

Residues 1 to 13 show a composition bias toward acidic residues; it reads MSDNDDIEVESDE. The disordered stretch occupies residues 1-40; it reads MSDNDDIEVESDEEQPRFQSAADKRAHHNALERKRRDHIK. N-acetylserine is present on serine 2. Phosphoserine occurs at positions 2 and 11. One can recognise a bHLH domain in the interval 23-74; sequence DKRAHHNALERKRRDHIKDSFHSLRDSVPSLQGEKASRAQILDKATEYIQYM. Positions 29–40 are enriched in basic and acidic residues; the sequence is NALERKRRDHIK. Position 66 is an N6-acetyllysine (lysine 66). Positions 81 to 102 are leucine-zipper; that stretch reads HQQDIDDLKRQNALLEQQVRAL. Positions 105 to 160 are disordered; it reads ARSSAQLQTNYPSSDNSLYTNAKGGTISAFDGGSDSSSESEPEEPQNRKKLRMEAS. At serine 107 the chain carries Phosphoserine. Residues 107 to 124 are compositionally biased toward polar residues; the sequence is SSAQLQTNYPSSDNSLYT. N6-acetyllysine occurs at positions 153 and 154.

This sequence belongs to the MAX family. In terms of assembly, efficient DNA binding requires dimerization with another bHLH protein. Binds DNA as a heterodimer with MYC or MAD. Part of the E2F6.com-1 complex in G0 phase composed of E2F6, MGA, MAX, TFDP1, CBX3, BAT8, EUHMTASE1, RING1, RNF2, MBLR, L3MBTL2 and YAF2. Component of some MLL1/MLL complex, at least composed of the core components KMT2A/MLL1, ASH2L, HCFC1/HCF1, WDR5 and RBBP5, as well as the facultative components BACC1, CHD8, E2F6, HSP70, INO80C, KANSL1, LAS1L, MAX, MCRS1, MGA, MYST1/MOF, PELP1, PHF20, PRP31, RING2, RUVB1/TIP49A, RUVB2/TIP49B, SENP3, TAF1, TAF4, TAF6, TAF7, TAF9 and TEX10. Interacts with SPAG9. The heterodimer MYC:MAX interacts with ABI1; the interaction may enhance MYC:MAX transcriptional activity. Post-translationally, phosphorylated.

It localises to the nucleus. Its subcellular location is the cell projection. It is found in the dendrite. Transcription regulator. Forms a sequence-specific DNA-binding protein complex with MYC or MAD which recognizes the core sequence 5'-CAC[GA]TG-3'. The MYC:MAX complex is a transcriptional activator, whereas the MAD:MAX complex is a repressor. May repress transcription via the recruitment of a chromatin remodeling complex containing H3 'Lys-9' histone methyltransferase activity. Represses MYC transcriptional activity from E-box elements. This chain is Protein max, found in Rattus norvegicus (Rat).